Here is a 491-residue protein sequence, read N- to C-terminus: (R)-citramalate synthase CimA (491 aa).

The Pyruvate carboxyltransferase domain occupies 3 to 254 (VRIFDTTLRD…DTKIKMEKLY (252 aa)).

The protein belongs to the alpha-IPM synthase/homocitrate synthase family. In terms of assembly, homodimer.

The enzyme catalyses pyruvate + acetyl-CoA + H2O = (3R)-citramalate + CoA + H(+). It participates in amino-acid biosynthesis; L-isoleucine biosynthesis; 2-oxobutanoate from pyruvate: step 1/3. In terms of biological role, catalyzes the condensation of pyruvate and acetyl-coenzyme A to form (R)-citramalate. This Methanocaldococcus jannaschii (strain ATCC 43067 / DSM 2661 / JAL-1 / JCM 10045 / NBRC 100440) (Methanococcus jannaschii) protein is (R)-citramalate synthase CimA (cimA).